The sequence spans 384 residues: Cyclohexane-1-carbonyl-CoA dehydrogenase (384 aa).

It belongs to the acyl-CoA dehydrogenase family. Homotetramer. The cofactor is FAD.

The enzyme catalyses cyclohexane-1-carbonyl-CoA + oxidized [electron-transfer flavoprotein] + H(+) = cyclohex-1-ene-1-carbonyl-CoA + reduced [electron-transfer flavoprotein]. Its function is as follows. Mediates the conversion of cyclohexane-1-carbonyl-CoA (ChCoA) into cyclohex-1-ene-1-carbonyl-CoA in biosynthesis of cyclohexane-1-carboxylate, a by-product produced during fermentation of benzoate and crotonate to acetate. The chain is Cyclohexane-1-carbonyl-CoA dehydrogenase from Syntrophus aciditrophicus (strain SB).